The sequence spans 417 residues: MSSKYPRSVRCCLPLCALTLEAALTLLFYFFTHYDASLEDQKGLVASYQVGQDLTVMAAIGFGFLTSSFRGHSWSSVAFNLFMLALGVQWAILLDGFLSQFPPGKVVITLFSIRLATMSALSVLISAGAVLGYVNLVQLVVMVLVEVTALGTMRMVISNIFNTDYHMNMMHIYVFAACFGLSVAWCLPKPLAKGTEDKDQTATIPSLSAMLGALFLWMFWPSFNSALLRSPIERKNAVFNTYYAVAVSVVTAISVSSLAHPQGKINMTYMHNAVLAGGVAVATSCHLIPSPWLAMVLGLVAGLISIGGAKCLPGCCNRVLGIHDSSVMHYNFSLLGLLGEIIYIVLLVLDTVGAGNGMVGFQVLVSIGELSLAIVIALTSGLLTGLLLNLKIWKAPHAAKYFDDQVFWKFPHLAVGF.

Helical transmembrane passes span 12–32 (CLPLCALTLEAALTLLFYFFT), 44–64 (LVASYQVGQDLTVMAAIGFGF), 77–97 (VAFNLFMLALGVQWAILLDGF), 125–145 (ISAGAVLGYVNLVQLVVMVLV), 172–192 (IYVFAACFGLSVAWCLPKPLA), 203–223 (TIPSLSAMLGALFLWMFWPSF), 238–258 (VFNTYYAVAVSVVTAISVSSL), 265–285 (INMTYMHNAVLAGGVAVATSC), 287–307 (LIPSPWLAMVLGLVAGLISIG), 331–351 (NFSLLGLLGEIIYIVLLVLDT), and 358–378 (MVGFQVLVSIGELSLAIVIAL).

It belongs to the ammonium transporter (TC 2.A.49) family. Rh subfamily.

The protein localises to the membrane. May be part of an oligomeric complex which is likely to have a transport or channel function in the erythrocyte membrane. The polypeptide is RH-like protein ID (Gorilla gorilla gorilla (Western lowland gorilla)).